The following is a 640-amino-acid chain: DNA gyrase subunit B (640 aa).

The region spanning 423–537 (AELYIVEGDS…NGNIYIAQPP (115 aa)) is the Toprim domain. Mg(2+) is bound by residues glutamate 429, aspartate 502, and aspartate 504.

The protein belongs to the type II topoisomerase GyrB family. In terms of assembly, heterotetramer, composed of two GyrA and two GyrB chains. In the heterotetramer, GyrA contains the active site tyrosine that forms a transient covalent intermediate with DNA, while GyrB binds cofactors and catalyzes ATP hydrolysis. Mg(2+) is required as a cofactor. Requires Mn(2+) as cofactor. It depends on Ca(2+) as a cofactor.

It localises to the cytoplasm. It catalyses the reaction ATP-dependent breakage, passage and rejoining of double-stranded DNA.. Its function is as follows. A type II topoisomerase that negatively supercoils closed circular double-stranded (ds) DNA in an ATP-dependent manner to modulate DNA topology and maintain chromosomes in an underwound state. Negative supercoiling favors strand separation, and DNA replication, transcription, recombination and repair, all of which involve strand separation. Also able to catalyze the interconversion of other topological isomers of dsDNA rings, including catenanes and knotted rings. Type II topoisomerases break and join 2 DNA strands simultaneously in an ATP-dependent manner. The sequence is that of DNA gyrase subunit B from Spiroplasma citri.